Consider the following 157-residue polypeptide: Small ribosomal subunit protein uS7 (157 aa).

The protein belongs to the universal ribosomal protein uS7 family. As to quaternary structure, part of the 30S ribosomal subunit. Contacts proteins S9 and S11.

In terms of biological role, one of the primary rRNA binding proteins, it binds directly to 16S rRNA where it nucleates assembly of the head domain of the 30S subunit. Is located at the subunit interface close to the decoding center, probably blocks exit of the E-site tRNA. The chain is Small ribosomal subunit protein uS7 from Variovorax paradoxus (strain S110).